Here is a 198-residue protein sequence, read N- to C-terminus: Recombination protein RecR (198 aa).

The C4-type zinc-finger motif lies at 56–71 (CKVCGNFSEEDECVIC). The Toprim domain occupies 79 to 174 (GVICVVEEPK…RVSKLASGLP (96 aa)).

The protein belongs to the RecR family.

Its function is as follows. May play a role in DNA repair. It seems to be involved in an RecBC-independent recombinational process of DNA repair. It may act with RecF and RecO. This chain is Recombination protein RecR, found in Tropheryma whipplei (strain TW08/27) (Whipple's bacillus).